The primary structure comprises 330 residues: Elongation factor Ts (330 aa).

The segment at 79-82 is involved in Mg(2+) ion dislocation from EF-Tu; the sequence is TDFV.

This sequence belongs to the EF-Ts family.

Its subcellular location is the cytoplasm. In terms of biological role, associates with the EF-Tu.GDP complex and induces the exchange of GDP to GTP. It remains bound to the aminoacyl-tRNA.EF-Tu.GTP complex up to the GTP hydrolysis stage on the ribosome. This Bacteroides fragilis (strain ATCC 25285 / DSM 2151 / CCUG 4856 / JCM 11019 / LMG 10263 / NCTC 9343 / Onslow / VPI 2553 / EN-2) protein is Elongation factor Ts.